A 322-amino-acid chain; its full sequence is MITRKTLSLNFLKPVLELEYQIDQLSKMTYKNKSLNIHDLTALKKQLIKIKIEIFQSLTPLQRLHLVRQVDRPTTLDYIGHILDDWIELHGDRGGTDDPALIGGLGKINNRTVVCIGHQRGKDTKDNVLRNFGMASPGGYRKALRLMKHANRFNFPILTFIDTPGAWAGVDAERLGQGEAIAVNLREMFSFNVPIICTIIGEGGSGGALGIGVGDKVLMLEDAVYTVATPEACAAILWKDSKQSLEAAEALKITSYDLKALGIIDDIVEEPLGGSQEDSLLASHILHSKLVTELNYLLSLSSDKLKELRIPKIRRMGTFYEG.

Residues 39–296 enclose the CoA carboxyltransferase C-terminal domain; it reads DLTALKKQLI…HSKLVTELNY (258 aa).

The protein belongs to the AccA family. Acetyl-CoA carboxylase is a heterohexamer composed of biotin carboxyl carrier protein (accB), biotin carboxylase (accC) and two subunits each of ACCase subunit alpha (accA) and ACCase subunit beta (accD).

It localises to the plastid. Its subcellular location is the chloroplast. It carries out the reaction N(6)-carboxybiotinyl-L-lysyl-[protein] + acetyl-CoA = N(6)-biotinyl-L-lysyl-[protein] + malonyl-CoA. It participates in lipid metabolism; malonyl-CoA biosynthesis; malonyl-CoA from acetyl-CoA: step 1/1. In terms of biological role, component of the acetyl coenzyme A carboxylase (ACC) complex. First, biotin carboxylase catalyzes the carboxylation of biotin on its carrier protein (BCCP) and then the CO(2) group is transferred by the carboxyltransferase to acetyl-CoA to form malonyl-CoA. The protein is Acetyl-coenzyme A carboxylase carboxyl transferase subunit alpha of Antithamnion sp. (Red alga).